Reading from the N-terminus, the 427-residue chain is Trigger factor (427 aa).

A PPIase FKBP-type domain is found at 163–248 (GDTVILDFEG…LHEIKTKEVP (86 aa)).

It belongs to the FKBP-type PPIase family. Tig subfamily.

Its subcellular location is the cytoplasm. The enzyme catalyses [protein]-peptidylproline (omega=180) = [protein]-peptidylproline (omega=0). Involved in protein export. Acts as a chaperone by maintaining the newly synthesized protein in an open conformation. Functions as a peptidyl-prolyl cis-trans isomerase. The polypeptide is Trigger factor (Listeria monocytogenes serotype 4a (strain HCC23)).